The following is a 581-amino-acid chain: Bestrophin-1 (581 aa).

Topologically, residues 1-31 (MTVTYSSQVANARLGSFSRLLLCWRGSIYKL) are cytoplasmic. Position 10 (Ala-10) interacts with Ca(2+). The chain crosses the membrane as a helical span at residues 32–51 (LYGEFLIFLLCYYIIRFIYR). The Extracellular segment spans residues 52–60 (MALTDEQQV). Residues 61–82 (IFEKLTLYCDSYIQLIPISFVL) form a helical membrane-spanning segment. The Cytoplasmic segment spans residues 83–237 (GFYVTLVVTR…DWISVPLVYT (155 aa)). The chain crosses the membrane as a helical span at residues 238 to 255 (QVVTVAVYSFFLACLVGR). Residues 256–274 (QFLNPAKAYPGHEMDLVVP) are Extracellular-facing. Residues 275-288 (LFTFLQFFFYAGWL) traverse the membrane as a helical segment. Over 289-581 (KVAEQLINPF…ALENRDEAHS (293 aa)) the chain is Cytoplasmic. 4 residues coordinate Ca(2+): Gln-293, Asn-296, Asp-301, and Asp-304. A disordered region spans residues 416 to 440 (EGHFHEGHPKNLRGARLDSSDQEDS).

It belongs to the anion channel-forming bestrophin (TC 1.A.46) family. Calcium-sensitive chloride channel subfamily. Interacts with YWHAG; this interaction promotes the ligand-gated L-glutamate channel activity leading to the positive regulation of NMDA glutamate receptor activity through the L-glutamate secretion. Phosphorylated (in vitro). Post-translationally, dephosphorylated (in vitro) by PP2A.

Its subcellular location is the cell membrane. The protein localises to the basolateral cell membrane. The catalysed reaction is chloride(in) = chloride(out). It catalyses the reaction hydrogencarbonate(in) = hydrogencarbonate(out). It carries out the reaction 4-aminobutanoate(in) = 4-aminobutanoate(out). The enzyme catalyses L-glutamate(out) = L-glutamate(in). In terms of biological role, ligand-gated anion channel that allows the movement of anions across cell membranes when activated by calcium (Ca2+). Allows the movement of chloride and hydrogencarbonate. Found in a partially open conformation leading to significantly smaller chloride movement. Upon F2R/PAR-1 activation, the sequestered calcium is released into the cytosol of astrocytes, leading to the (Ca2+)-dependent release of L-glutamate into the synaptic cleft that targets the neuronal postsynaptic GRIN2A/NMDAR receptor resulting in the synaptic plasticity regulation. Upon activation of the norepinephrine-alpha-1 adrenergic receptor signaling pathway, transports as well D-serine than L-glutamate in a (Ca2+)-dependent manner, leading to activation of adjacent NMDAR receptors and therefore regulates the heterosynaptic long-term depression and metaplasticity during initial memory acquisition. Releases the 4-aminobutanoate neurotransmitter in a (Ca2+)-dependent manner, and participates in its tonic release from cerebellar glial cells. This Sus scrofa (Pig) protein is Bestrophin-1.